A 285-amino-acid chain; its full sequence is Iodotyrosine deiodinase 1 (285 aa).

Residues 1–21 form a helical membrane-spanning segment; the sequence is MFLLTPVLVAVVCILVIWVFK. FMN contacts are provided by residues 96–100 and 124–125; these read RRSIR and SG. 3,5-diiodo-L-tyrosine is bound by residues Ala126, Glu153, Tyr157, and Lys178. Residues Ala126, Glu153, Tyr157, and Lys178 each contribute to the 3-iodo-L-tyrosine site. Residues 233-235 and Arg275 contribute to the FMN site; that span reads TTT.

The protein belongs to the nitroreductase family. In terms of assembly, homodimer. FMN is required as a cofactor.

It localises to the cell membrane. Its subcellular location is the cytoplasmic vesicle membrane. The enzyme catalyses 2 iodide + L-tyrosine + 2 NADP(+) = 3,5-diiodo-L-tyrosine + 2 NADPH + H(+). It carries out the reaction iodide + L-tyrosine + NADP(+) = 3-iodo-L-tyrosine + NADPH. It catalyses the reaction 3-iodo-L-tyrosine + iodide + NADP(+) = 3,5-diiodo-L-tyrosine + NADPH + H(+). The catalysed reaction is L-tyrosine + chloride + NADP(+) = 3-chloro-L-tyrosine + NADPH. The enzyme catalyses bromide + L-tyrosine + NADP(+) = 3-bromo-L-tyrosine + NADPH. Its function is as follows. Catalyzes the dehalogenation of halotyrosines such as 3-bromo-L-tyrosine, 3-chloro-L-tyrosine, 3-iodo-L-tyrosine and 3,5-diiodo-L-tyrosine. During thyroid hormone biosynthesis, facilitates iodide salvage by catalysing the oxidative NADPH-dependent deiodination of the halogenated by-products of thyroid hormone production, monoiodotyrosine (L-MIT) and diiodotyrosine (L-DIT). The scavanged iodide can then reenter the hormone-producing pathways. Acts more efficiently on 3-iodo-L-tyrosine than 3,5-diiodo-L-tyrosine. This Rattus norvegicus (Rat) protein is Iodotyrosine deiodinase 1 (Iyd).